The sequence spans 554 residues: Dihydroxy-acid dehydratase (554 aa).

Asp-78 lines the Mg(2+) pocket. Cys-119 contacts [2Fe-2S] cluster. Residues Asp-120 and Lys-121 each contribute to the Mg(2+) site. The residue at position 121 (Lys-121) is an N6-carboxylysine. Cys-191 contributes to the [2Fe-2S] cluster binding site. Mg(2+) is bound at residue Glu-444. The active-site Proton acceptor is Ser-470.

This sequence belongs to the IlvD/Edd family. In terms of assembly, homodimer. [2Fe-2S] cluster is required as a cofactor. Requires Mg(2+) as cofactor.

It carries out the reaction (2R)-2,3-dihydroxy-3-methylbutanoate = 3-methyl-2-oxobutanoate + H2O. The enzyme catalyses (2R,3R)-2,3-dihydroxy-3-methylpentanoate = (S)-3-methyl-2-oxopentanoate + H2O. The protein operates within amino-acid biosynthesis; L-isoleucine biosynthesis; L-isoleucine from 2-oxobutanoate: step 3/4. It participates in amino-acid biosynthesis; L-valine biosynthesis; L-valine from pyruvate: step 3/4. In terms of biological role, functions in the biosynthesis of branched-chain amino acids. Catalyzes the dehydration of (2R,3R)-2,3-dihydroxy-3-methylpentanoate (2,3-dihydroxy-3-methylvalerate) into 2-oxo-3-methylpentanoate (2-oxo-3-methylvalerate) and of (2R)-2,3-dihydroxy-3-methylbutanoate (2,3-dihydroxyisovalerate) into 2-oxo-3-methylbutanoate (2-oxoisovalerate), the penultimate precursor to L-isoleucine and L-valine, respectively. The chain is Dihydroxy-acid dehydratase from Nitratidesulfovibrio vulgaris (strain DP4) (Desulfovibrio vulgaris).